The sequence spans 175 residues: MSPNLQEGARLVEGKPSSTSFSIESILGLDQKKDDAPSMKPHRPWADTCSSLGKDANLRLHVPSFPNGISFPHPGDHPMPEERAMKYENYFSASERASLKRELNWYRGRRPRTAFTQNQVEVLENVFRVNCYPGIDIREDLARKLNLEEDRIQIWFQNRRAKLKRSHRESQFLMA.

Positions 1–44 (MSPNLQEGARLVEGKPSSTSFSIESILGLDQKKDDAPSMKPHRP) are disordered. The homeobox DNA-binding region spans 108–167 (GRRPRTAFTQNQVEVLENVFRVNCYPGIDIREDLARKLNLEEDRIQIWFQNRRAKLKRSH).

Belongs to the ANF homeobox family. As to quaternary structure, interacts with TLE1.

Its subcellular location is the nucleus. In terms of biological role, required for the normal development of the forebrain, eyes and other anterior structures such as the olfactory placodes and pituitary gland. Possible transcriptional repressor. Binds to the palindromic PIII sequence, 5'-AGCTTGAGTCTAATTGAATTAACTGTAC-3'. The sequence is that of Homeobox expressed in ES cells 1 (HESX1) from Oryctolagus cuniculus (Rabbit).